Reading from the N-terminus, the 92-residue chain is MSDHYHYPLDASWSTEEITSVLHFLNQVELAYEAKVRAEELLKSYAAYKEIVRSKSQEKQIDREFQQASGYSTYQAVKKAREIEKGFFSLGR.

This sequence belongs to the UPF0223 family.

The protein is UPF0223 protein Sez_0908 of Streptococcus equi subsp. zooepidemicus (strain MGCS10565).